Here is a 193-residue protein sequence, read N- to C-terminus: Hypoxanthine/guanine phosphoribosyltransferase (193 aa).

It belongs to the purine/pyrimidine phosphoribosyltransferase family. Archaeal HPRT subfamily. As to quaternary structure, homodimer.

It is found in the cytoplasm. The catalysed reaction is IMP + diphosphate = hypoxanthine + 5-phospho-alpha-D-ribose 1-diphosphate. The enzyme catalyses GMP + diphosphate = guanine + 5-phospho-alpha-D-ribose 1-diphosphate. It functions in the pathway purine metabolism; IMP biosynthesis via salvage pathway; IMP from hypoxanthine: step 1/1. Functionally, catalyzes a salvage reaction resulting in the formation of IMP that is energically less costly than de novo synthesis. Prefers hypoxanthine, has 66% activity with guanine while activity with adenine, xanthine, uracil, orotate, or cytosine is negligible. This chain is Hypoxanthine/guanine phosphoribosyltransferase, found in Methanothermobacter marburgensis (strain ATCC BAA-927 / DSM 2133 / JCM 14651 / NBRC 100331 / OCM 82 / Marburg) (Methanobacterium thermoautotrophicum).